Reading from the N-terminus, the 190-residue chain is Probable thymidylate kinase (190 aa).

7–14 (GIDGAGKT) lines the ATP pocket.

This sequence belongs to the thymidylate kinase family.

The catalysed reaction is dTMP + ATP = dTDP + ADP. This chain is Probable thymidylate kinase, found in Thermoplasma volcanium (strain ATCC 51530 / DSM 4299 / JCM 9571 / NBRC 15438 / GSS1).